The primary structure comprises 140 residues: uncharacterized protein (140 aa).

It belongs to the MG439/MG440 family.

This is an uncharacterized protein from Mycoplasma pneumoniae (strain ATCC 29342 / M129 / Subtype 1) (Mycoplasmoides pneumoniae).